A 669-amino-acid polypeptide reads, in one-letter code: MMTLRHLPFILLLILSGELYAEEKQCDFPTVENGRIAQYYYTFKSFYFPMSVDKKLSFFCLAGYATESGKQEEQIRCTAEGWSPNPRCYKKCLKPDLRNGYVSNDKVLYKLQERMSYGCSSGYKTTGGKDEEVVHCLSAGWSSQPSCRKEQETCLAPELEHGNYSTTQRTFKVKDIVAYTCTAGYYTTTGKQTGEAECQANGWSLTPQCNKLMCSSLRLIENGYFHPVKQTYEEGDVVQFFCHENYYLSGSDLIQCYNFGWYPESPICEGRRNRCPPPPVPLNSKIQPHSTTYRHGERVHIECELNFVIQGSEELLCENGKWTEPPKCIEEKEKVACEQPPSVENGVAHPHSEIYYSGDKVTYRCGGGYSLRGSSTITCNRGRWTLPPECVENIENCKPPPDIANGVVVDGLLASYTTGSSVEYRCNEYYLLKGSETSRCEQGAWSSPPVCLEPCTIDVDHMNRNNIQLKWKYEGKILHGDLIDFVCKQGYNLSPSIPLSEISAQCNRGDVRYPMCIRKESKGMCASPPVIRNGDIVSSAARTYENGSSVEYRCFDNHFLQGSQNVYCVDGVWTTPPSCLEPCTLSFVEMDKNYLQLKWNFDNRPLILHGEYIEFMCKRDAYISETSIAGSVLRVQCDRGRLKYPKCTPRDRRLSFQEALRTRRQMEKR.

Positions 1–21 (MMTLRHLPFILLLILSGELYA) are cleaved as a signal peptide. Sushi domains follow at residues 25–89 (QCDF…PRCY), 90–149 (KKCL…SCRK), 152–211 (ETCL…QCNK), 212–270 (LMCS…ICEG), 273–330 (NRCP…KCIE), 335–392 (VACE…ECVE), 395–453 (ENCK…VCLE), 454–517 (PCTI…PMCI), 523–581 (GMCA…SCLE), and 582–648 (PCTL…PKCT). Cystine bridges form between Cys26-Cys77, Cys60-Cys88, Cys92-Cys136, Cys119-Cys147, Cys154-Cys198, Cys181-Cys209, Cys214-Cys256, Cys242-Cys268, Cys275-Cys317, Cys303-Cys328, Cys337-Cys379, Cys365-Cys390, Cys397-Cys440, Cys426-Cys451, Cys455-Cys506, Cys487-Cys516, Cys525-Cys568, Cys554-Cys579, Cys583-Cys637, and Cys617-Cys647. N-linked (GlcNAc...) asparagine glycosylation occurs at Asn163. Residue Asn546 is glycosylated (N-linked (GlcNAc...) asparagine).

As to quaternary structure, tetramer of two A chains (F13A1) and two B (F13B) chains. Predominantly expressed in liver and kidney.

It localises to the secreted. Functionally, the B chain of factor XIII is not catalytically active, but is thought to stabilize the A subunits and regulate the rate of transglutaminase formation by thrombin. This Mus musculus (Mouse) protein is Coagulation factor XIII B chain (F13b).